The primary structure comprises 219 residues: Thymidylate kinase (219 aa).

7-14 is a binding site for ATP; it reads GIDGCGKT.

This sequence belongs to the thymidylate kinase family.

The catalysed reaction is dTMP + ATP = dTDP + ADP. Phosphorylation of dTMP to form dTDP in both de novo and salvage pathways of dTTP synthesis. The chain is Thymidylate kinase from Anaplasma phagocytophilum (strain HZ).